The following is a 181-amino-acid chain: Large ribosomal subunit protein uL5 (181 aa).

Belongs to the universal ribosomal protein uL5 family. Part of the 50S ribosomal subunit; part of the 5S rRNA/L5/L18/L25 subcomplex. Contacts the 5S rRNA and the P site tRNA. Forms a bridge to the 30S subunit in the 70S ribosome.

Functionally, this is one of the proteins that bind and probably mediate the attachment of the 5S RNA into the large ribosomal subunit, where it forms part of the central protuberance. In the 70S ribosome it contacts protein S13 of the 30S subunit (bridge B1b), connecting the 2 subunits; this bridge is implicated in subunit movement. Contacts the P site tRNA; the 5S rRNA and some of its associated proteins might help stabilize positioning of ribosome-bound tRNAs. The chain is Large ribosomal subunit protein uL5 from Sulfurovum sp. (strain NBC37-1).